The chain runs to 127 residues: Protein translocase subunit SecE (127 aa).

The next 3 helical transmembrane spans lie at 16-36 (AMKWIVVAILLIVAIVGNYLY), 41-61 (LPLRALAVVILIAAAGGVALL), and 96-116 (IVAAVTAVMSLILWGLDGILV).

This sequence belongs to the SecE/SEC61-gamma family. In terms of assembly, component of the Sec protein translocase complex. Heterotrimer consisting of SecY, SecE and SecG subunits. The heterotrimers can form oligomers, although 1 heterotrimer is thought to be able to translocate proteins. Interacts with the ribosome. Interacts with SecDF, and other proteins may be involved. Interacts with SecA.

The protein resides in the cell inner membrane. Its function is as follows. Essential subunit of the Sec protein translocation channel SecYEG. Clamps together the 2 halves of SecY. May contact the channel plug during translocation. In Salmonella typhi, this protein is Protein translocase subunit SecE.